An 89-amino-acid chain; its full sequence is Probable Fe(2+)-trafficking protein (89 aa).

The protein belongs to the Fe(2+)-trafficking protein family.

Its function is as follows. Could be a mediator in iron transactions between iron acquisition and iron-requiring processes, such as synthesis and/or repair of Fe-S clusters in biosynthetic enzymes. The chain is Probable Fe(2+)-trafficking protein from Hahella chejuensis (strain KCTC 2396).